The sequence spans 562 residues: Arginine--tRNA ligase (562 aa).

A 'HIGH' region motif is present at residues 129–139; that stretch reads ANPTGPLHVGH.

Belongs to the class-I aminoacyl-tRNA synthetase family. As to quaternary structure, monomer.

It is found in the cytoplasm. It catalyses the reaction tRNA(Arg) + L-arginine + ATP = L-arginyl-tRNA(Arg) + AMP + diphosphate. In Stenotrophomonas maltophilia (strain K279a), this protein is Arginine--tRNA ligase.